A 124-amino-acid polypeptide reads, in one-letter code: Kinocilin (124 aa).

The next 2 helical transmembrane spans lie at 13–33 and 40–60; these read LQLA…GISV and MGGV…YPFL. The interval 80-124 is disordered; sequence PHPGADHGEGRSSTNGNKEGARSSLSTVSRTLEKLKPGTRGAEEC. The segment covering 90-109 has biased composition (polar residues); sequence RSSTNGNKEGARSSLSTVSR. Basic and acidic residues predominate over residues 110–124; sequence TLEKLKPGTRGAEEC.

It is found in the membrane. In terms of biological role, may play a role in stabilizing dense microtubular networks or in vesicular trafficking. In Homo sapiens (Human), this protein is Kinocilin (KNCN).